The chain runs to 333 residues: Probable G-protein coupled receptor 174 (333 aa).

Over 1 to 27 (MPANYTCTRPDGDNTDFRYFIYAVTYT) the chain is Extracellular. N-linked (GlcNAc...) asparagine glycosylation occurs at Asn-4. Residues 28–48 (VILVPGLIGNILALWVFYGYM) form a helical membrane-spanning segment. Topologically, residues 49–53 (KETKR) are cytoplasmic. The helical transmembrane segment at 54–74 (AVIFMINLAIADLLQVLSLPL) threads the bilayer. The Extracellular portion of the chain corresponds to 75-91 (RIFYYLNHDWPFGPGLC). The cysteines at positions 91 and 168 are disulfide-linked. Residues 92 to 112 (MFCFYLKYVNMYASIYFLVCI) traverse the membrane as a helical segment. The Cytoplasmic segment spans residues 113–134 (SVRRFWFLMYPFRFHDCKQKYD). The chain crosses the membrane as a helical span at residues 135–155 (LYISIAGWLIICLACVLFPLL). Topologically, residues 156–182 (RTSDDTSGNRTKCFVDLPTRNVNLAQS) are extracellular. Asn-164 carries an N-linked (GlcNAc...) asparagine glycan. The helical transmembrane segment at 183–203 (VVMMTIGELIGFVTPLLIVLY) threads the bilayer. Topologically, residues 204-231 (CTWKTVLSLQDKYPMAQDLGEKQKALKM) are cytoplasmic. The helical transmembrane segment at 232-252 (ILTCAGVFLICFAPYHFSFPL) threads the bilayer. At 253–269 (DFLVKSNEIKSCLARRV) the chain is on the extracellular side. Residues 270–290 (ILIFHSVALCLASLNSCLDPV) form a helical membrane-spanning segment. Over 291 to 333 (IYYFSTNEFRRRLSRQDLHDSIQLHAKSFVSNHTASTMTPELC) the chain is Cytoplasmic.

It belongs to the G-protein coupled receptor 1 family. As to quaternary structure, interacts with GNA13. Interacts with CCL21.

The protein localises to the cell membrane. G-protein-coupled receptor of lysophosphatidylserine (LysoPS) that plays different roles in immune response. Plays a negative role in regulatory T-cell accumulation and homeostasis. Under inflammatory conditions where LysoPS production increases, contributes to the down-regulation of regulatory T-cell activity to favor effector response. Mediates the suppression of IL-2 production in activated T-lymphocytes leading to inhibition of growth, proliferation and differentiation of T-cells. Mechanistically, acts via G(s)-containing heterotrimeric G proteins to trigger elevated cyclic AMP levels and protein kinase A/PKA activity, which may in turn act to antagonize proximal TCR signaling. Plays an important role in the initial period of sepsis through the regulation of macrophage polarization and pro- and anti-inflammatory cytokine secretions. Upon testosterone treatment, acts as a receptor for CCL21 and subsequently triggers through G(q)-alpha and G(12)/G(13) proteins a calcium flux leading to chemotactic effects on activated B-cells. Signals via GNA13 and PKA to promote CD86 up-regulation by follicular B-cells. In Homo sapiens (Human), this protein is Probable G-protein coupled receptor 174 (GPR174).